Consider the following 251-residue polypeptide: ATP synthase subunit a (251 aa).

5 helical membrane passes run 34 to 54 (VFLT…AASS), 93 to 113 (FVGT…LVPF), 130 to 150 (INTT…AGFS), 195 to 215 (LVVG…VMAL), and 216 to 236 (GLFT…AYIG).

The protein belongs to the ATPase A chain family. As to quaternary structure, F-type ATPases have 2 components, CF(1) - the catalytic core - and CF(0) - the membrane proton channel. CF(1) has five subunits: alpha(3), beta(3), gamma(1), delta(1), epsilon(1). CF(0) has four main subunits: a, b, b' and c.

The protein localises to the cellular thylakoid membrane. Its function is as follows. Key component of the proton channel; it plays a direct role in the translocation of protons across the membrane. The protein is ATP synthase subunit a of Nostoc sp. (strain PCC 7120 / SAG 25.82 / UTEX 2576).